A 336-amino-acid polypeptide reads, in one-letter code: Phosphatidylglycerol--prolipoprotein diacylglyceryl transferase (336 aa).

Transmembrane regions (helical) follow at residues 16–36 (IGPV…VLAV), 53–73 (ILDI…IYHI), and 93–113 (IWNG…AAWA). Arg-141 is an a 1,2-diacyl-sn-glycero-3-phospho-(1'-sn-glycerol) binding site. Helical transmembrane passes span 190–210 (PTFL…VFLG), 220–240 (GSLF…IEAL), and 253–273 (INVW…IVIQ).

It belongs to the Lgt family.

Its subcellular location is the cell membrane. The catalysed reaction is L-cysteinyl-[prolipoprotein] + a 1,2-diacyl-sn-glycero-3-phospho-(1'-sn-glycerol) = an S-1,2-diacyl-sn-glyceryl-L-cysteinyl-[prolipoprotein] + sn-glycerol 1-phosphate + H(+). The protein operates within protein modification; lipoprotein biosynthesis (diacylglyceryl transfer). In terms of biological role, catalyzes the transfer of the diacylglyceryl group from phosphatidylglycerol to the sulfhydryl group of the N-terminal cysteine of a prolipoprotein, the first step in the formation of mature lipoproteins. The sequence is that of Phosphatidylglycerol--prolipoprotein diacylglyceryl transferase from Bifidobacterium adolescentis (strain ATCC 15703 / DSM 20083 / NCTC 11814 / E194a).